We begin with the raw amino-acid sequence, 161 residues long: M-phase phosphoprotein 6 (161 aa).

Glycyl lysine isopeptide (Lys-Gly) (interchain with G-Cter in SUMO2) cross-links involve residues Lys-37 and Lys-86. Ser-111 bears the Phosphoserine mark. The Nuclear localization signal signature appears at Arg-117–Arg-134. Residues Lys-128, Lys-151, and Lys-154 each participate in a glycyl lysine isopeptide (Lys-Gly) (interchain with G-Cter in SUMO2) cross-link.

This sequence belongs to the MPP6 family. Associates with the RNA exosome complex, mediated by EXOSC3. Interacts with ARHGAP18. Interacts with exosome cofactors EXOSC10 and MTREX. Phosphorylated in M (mitotic) phase.

It localises to the nucleus. It is found in the nucleolus. The protein localises to the cytoplasm. In terms of biological role, RNA-binding protein that associates with the RNA exosome complex. Involved in the 3'-processing of the 7S pre-RNA to the mature 5.8S rRNA and plays a role in recruiting the RNA exosome complex to pre-rRNA; this function may include C1D. In Mus musculus (Mouse), this protein is M-phase phosphoprotein 6.